The sequence spans 211 residues: Thymidylate kinase (211 aa).

10–17 (GVEGCGKT) contacts ATP.

This sequence belongs to the thymidylate kinase family.

It carries out the reaction dTMP + ATP = dTDP + ADP. In terms of biological role, phosphorylation of dTMP to form dTDP in both de novo and salvage pathways of dTTP synthesis. The chain is Thymidylate kinase from Nostoc sp. (strain PCC 7120 / SAG 25.82 / UTEX 2576).